A 172-amino-acid polypeptide reads, in one-letter code: 3-hydroxydecanoyl-[acyl-carrier-protein] dehydratase (172 aa).

Histidine 71 is an active-site residue.

Belongs to the thioester dehydratase family. FabA subfamily. Homodimer.

It localises to the cytoplasm. The catalysed reaction is a (3R)-hydroxyacyl-[ACP] = a (2E)-enoyl-[ACP] + H2O. The enzyme catalyses (3R)-hydroxydecanoyl-[ACP] = (2E)-decenoyl-[ACP] + H2O. It carries out the reaction (2E)-decenoyl-[ACP] = (3Z)-decenoyl-[ACP]. The protein operates within lipid metabolism; fatty acid biosynthesis. Necessary for the introduction of cis unsaturation into fatty acids. Catalyzes the dehydration of (3R)-3-hydroxydecanoyl-ACP to E-(2)-decenoyl-ACP and then its isomerization to Z-(3)-decenoyl-ACP. Can catalyze the dehydratase reaction for beta-hydroxyacyl-ACPs with saturated chain lengths up to 16:0, being most active on intermediate chain length. This is 3-hydroxydecanoyl-[acyl-carrier-protein] dehydratase from Edwardsiella ictaluri (strain 93-146).